Reading from the N-terminus, the 380-residue chain is ATP phosphoribosyltransferase regulatory subunit (380 aa).

Belongs to the class-II aminoacyl-tRNA synthetase family. HisZ subfamily. In terms of assembly, heteromultimer composed of HisG and HisZ subunits.

The protein resides in the cytoplasm. It participates in amino-acid biosynthesis; L-histidine biosynthesis; L-histidine from 5-phospho-alpha-D-ribose 1-diphosphate: step 1/9. In terms of biological role, required for the first step of histidine biosynthesis. May allow the feedback regulation of ATP phosphoribosyltransferase activity by histidine. This is ATP phosphoribosyltransferase regulatory subunit from Thermoanaerobacter sp. (strain X514).